The sequence spans 198 residues: Ribosome maturation factor RimP (198 aa).

This sequence belongs to the RimP family.

It localises to the cytoplasm. Functionally, required for maturation of 30S ribosomal subunits. This is Ribosome maturation factor RimP from Rhizobium etli (strain ATCC 51251 / DSM 11541 / JCM 21823 / NBRC 15573 / CFN 42).